A 382-amino-acid chain; its full sequence is uncharacterized protein (382 aa).

12 helical membrane passes run 14 to 34 (GLLL…LWLA), 45 to 65 (VVSS…GYVI), 75 to 95 (YLAS…IGFW), 102 to 122 (FVAG…LMCS), 131 to 151 (LLAA…LLVS), 157 to 177 (LMSV…PLLF), 206 to 226 (VNGC…MPLF), 235 to 255 (ASIG…QWPI), 270 to 290 (VQVF…AMAP), 291 to 311 (ALFI…AWAC), 325 to 345 (ALLL…AMLM), and 348 to 368 (FSDN…LLML).

The protein belongs to the major facilitator superfamily. YcaD (TC 2.A.1.26) family.

The protein resides in the cell inner membrane. This is an uncharacterized protein from Escherichia coli O17:K52:H18 (strain UMN026 / ExPEC).